The primary structure comprises 184 residues: uncharacterized protein (184 aa).

Residues 5–27 (YLLATAMFLIVCVYVISETVNLH) traverse the membrane as a helical segment.

The protein resides in the membrane. This is an uncharacterized protein from Methanocaldococcus jannaschii (strain ATCC 43067 / DSM 2661 / JAL-1 / JCM 10045 / NBRC 100440) (Methanococcus jannaschii).